A 642-amino-acid polypeptide reads, in one-letter code: tRNA uridine 5-carboxymethylaminomethyl modification enzyme MnmG (642 aa).

An FAD-binding site is contributed by 24–29; the sequence is GGGHAG. An NAD(+)-binding site is contributed by 284 to 298; that stretch reads GPRYCPSIEDKIHRF.

It belongs to the MnmG family. In terms of assembly, homodimer. Heterotetramer of two MnmE and two MnmG subunits. Requires FAD as cofactor.

It localises to the cytoplasm. Functionally, NAD-binding protein involved in the addition of a carboxymethylaminomethyl (cmnm) group at the wobble position (U34) of certain tRNAs, forming tRNA-cmnm(5)s(2)U34. The sequence is that of tRNA uridine 5-carboxymethylaminomethyl modification enzyme MnmG from Psychrobacter sp. (strain PRwf-1).